The primary structure comprises 433 residues: Homoserine O-acetyltransferase (433 aa).

The region spanning 41–385 (NVVLVCHALT…HGHDAFLVEP (345 aa)) is the AB hydrolase-1 domain. The interval 55–74 (VARSPAPERNEGTRGAGQAG) is disordered. Ser166 (nucleophile) is an active-site residue. Residue Arg237 coordinates substrate. Catalysis depends on residues Asp345 and His378. Residue Asp379 participates in substrate binding. Positions 403–433 (RAVSDDGGGGGNDSARPERDHAPVHASLFKG) are disordered.

It belongs to the AB hydrolase superfamily. MetX family. Homodimer.

Its subcellular location is the cytoplasm. The catalysed reaction is L-homoserine + acetyl-CoA = O-acetyl-L-homoserine + CoA. Its pathway is amino-acid biosynthesis; L-methionine biosynthesis via de novo pathway; O-acetyl-L-homoserine from L-homoserine: step 1/1. Transfers an acetyl group from acetyl-CoA to L-homoserine, forming acetyl-L-homoserine. This is Homoserine O-acetyltransferase from Halorubrum lacusprofundi (strain ATCC 49239 / DSM 5036 / JCM 8891 / ACAM 34).